Reading from the N-terminus, the 726-residue chain is Dipeptidyl-peptidase 5 (726 aa).

A signal peptide spans 1 to 19 (MAAAKWLIASLAFASSGLA). N-linked (GlcNAc...) asparagine glycans are attached at residues N96 and N252. The interval 269–291 (AEPINKRNGPRTPQGIEGASSSP) is disordered. S558 functions as the Charge relay system in the catalytic mechanism. Residue N605 is glycosylated (N-linked (GlcNAc...) asparagine). Catalysis depends on charge relay system residues D641 and H673. N-linked (GlcNAc...) asparagine glycosylation occurs at N699.

This sequence belongs to the peptidase S9C family.

It is found in the secreted. In terms of biological role, extracellular dipeptidyl-peptidase which removes N-terminal dipeptides sequentially from polypeptides having unsubstituted N-termini. Contributes to pathogenicity. In Trichophyton tonsurans (Scalp ringworm fungus), this protein is Dipeptidyl-peptidase 5 (DPP5).